Consider the following 348-residue polypeptide: Small ribosomal subunit protein mS45 (348 aa).

A compositionally biased stretch (low complexity) spans 37 to 57; that stretch reads SCSSSSPQSSQPTTHQQQCSS. The disordered stretch occupies residues 37–63; the sequence is SCSSSSPQSSQPTTHQQQCSSFSTTAP.

It belongs to the mitochondrion-specific ribosomal protein mS45 family. In terms of assembly, component of the mitochondrial small ribosomal subunit (mt-SSU). Mature N.crassa 74S mitochondrial ribosomes consist of a small (37S) and a large (54S) subunit. The 37S small subunit contains a 16S ribosomal RNA (16S mt-rRNA) and 32 different proteins. The 54S large subunit contains a 23S rRNA (23S mt-rRNA) and 42 different proteins.

Its subcellular location is the mitochondrion. In terms of biological role, component of the mitochondrial ribosome (mitoribosome), a dedicated translation machinery responsible for the synthesis of mitochondrial genome-encoded proteins, including at least some of the essential transmembrane subunits of the mitochondrial respiratory chain. The mitoribosomes are attached to the mitochondrial inner membrane and translation products are cotranslationally integrated into the membrane. This is Small ribosomal subunit protein mS45 (mrps35) from Neurospora crassa (strain ATCC 24698 / 74-OR23-1A / CBS 708.71 / DSM 1257 / FGSC 987).